The primary structure comprises 246 residues: Granzyme H (246 aa).

Positions 1-18 (MQPFLLLLAFLLTPGAGT) are cleaved as a signal peptide. Positions 19 to 20 (EE) are cleaved as a propeptide — activation peptide. Residues 21–244 (IIGGHEAKPH…FLPWIKRTMK (224 aa)) enclose the Peptidase S1 domain. The segment at 46 to 48 (RKR) is mediates the preference for acidic residues at the P3' and P4' sites. Cysteines 49 and 65 form a disulfide. His64 (charge relay system) is an active-site residue. Residues Asn71 and Asn104 are each glycosylated (N-linked (GlcNAc...) asparagine). Asp108 (charge relay system) is an active-site residue. 2 disulfides stabilise this stretch: Cys142–Cys208 and Cys172–Cys187. Asn179 carries N-linked (GlcNAc...) asparagine glycosylation. The Charge relay system role is filled by Ser202.

Belongs to the peptidase S1 family. Granzyme subfamily. Constitutively expressed in NK cells.

Its subcellular location is the cytolytic granule. Its activity is regulated as follows. Inhibited by SERPINB1. In terms of biological role, cytotoxic chymotrypsin-like serine protease with preference for bulky and aromatic residues at the P1 position and acidic residues at the P3' and P4' sites. Probably necessary for target cell lysis in cell-mediated immune responses. Participates in the antiviral response via direct cleavage of several proteins essential for viral replication. This is Granzyme H (GZMH) from Homo sapiens (Human).